Consider the following 286-residue polypeptide: Putative sugar uptake protein lin0215 (286 aa).

8 helical membrane-spanning segments follow: residues M4 to S26, G33 to L55, L114 to A136, G149 to I167, A177 to H194, L207 to A226, V230 to V252, and L264 to A283.

It belongs to the GRP transporter (TC 2.A.7.5) family.

The protein resides in the cell membrane. This Listeria innocua serovar 6a (strain ATCC BAA-680 / CLIP 11262) protein is Putative sugar uptake protein lin0215.